We begin with the raw amino-acid sequence, 528 residues long: Capsid scaffolding protein (528 aa).

Active-site charge relay system residues include His-46, Ser-116, and His-135. An interaction with pAP region spans residues 270-288 (HGNYDAVESATATTAMSNQ). The tract at residues 394-432 (KKRHFQSDSEDELSFPGDPEYTKKRRRHKVDNDDDKEMA) is disordered. The short motif at 416–422 (KKRRRHK) is the Nuclear localization signal element. The interval 508-528 (SMDLLKLNKKLFVDALNKMDS) is interaction with major capsid protein.

It belongs to the herpesviridae capsid scaffolding protein family. In terms of assembly, homomultimer. Interacts with major capsid protein. Exists in a monomer-dimer equilibrium with the dimer being the active species. In terms of processing, capsid scaffolding protein is cleaved by assemblin after formation of the spherical procapsid. As a result, the capsid obtains its mature, icosahedral shape. Cleavages occur at two or more sites: release (R-site) and maturation (M-site).

The protein localises to the host cytoplasm. It is found in the host nucleus. The enzyme catalyses Cleaves -Ala-|-Ser- and -Ala-|-Ala- bonds in the scaffold protein.. Functionally, acts as a scaffold protein by binding major capsid protein in the cytoplasm, inducing the nuclear localization of both proteins. Multimerizes in the nucleus such as major capsid protein forms the icosahedral T=16 capsid. Autocatalytic cleavage releases the assembly protein, and subsequently abolishes interaction with major capsid protein. Cleavages products are evicted from the capsid before or during DNA packaging. In terms of biological role, protease that plays an essential role in virion assembly within the nucleus. Catalyzes the cleavage of the assembly protein after formation of the spherical procapsid. By that cleavage, the capsid matures and gains its icosahedral shape. The cleavage sites seem to include -Ala-Ser-, -Ala-Ala-, as well as Ala-Thr bonds. Assemblin and cleavages products are evicted from the capsid before or during DNA packaging. Its function is as follows. Plays a major role in capsid assembly. Acts as a scaffold protein by binding major capsid protein. Multimerizes in the nucleus such as major capsid protein forms the icosahedral T=16 capsid. Cleaved by assemblin after capsid completion. The cleavages products are evicted from the capsid before or during DNA packaging. This Homo sapiens (Human) protein is Capsid scaffolding protein (U53).